Reading from the N-terminus, the 244-residue chain is DNA repair protein RecO (244 aa).

The protein belongs to the RecO family.

Functionally, involved in DNA repair and RecF pathway recombination. The polypeptide is DNA repair protein RecO (Polynucleobacter necessarius subsp. necessarius (strain STIR1)).